Here is an 80-residue protein sequence, read N- to C-terminus: Putative defensin-like protein 15 (80 aa).

A signal peptide spans 1-29 (MAKFASIITFIYAALVLFAAFEVPTMVEA). Glutamine 30 is modified (pyrrolidone carboxylic acid). 4 cysteine pairs are disulfide-bonded: cysteine 33–cysteine 80, cysteine 44–cysteine 65, cysteine 50–cysteine 74, and cysteine 54–cysteine 76.

It belongs to the DEFL family.

It localises to the secreted. Confers broad-spectrum resistance to pathogens. The protein is Putative defensin-like protein 15 (PDF1.2B) of Arabidopsis thaliana (Mouse-ear cress).